Reading from the N-terminus, the 379-residue chain is Deoxyuridine 5'-triphosphate nucleotidohydrolase (379 aa).

This sequence belongs to the dUTPase family. The cofactor is Mg(2+).

The catalysed reaction is dUTP + H2O = dUMP + diphosphate + H(+). Involved in nucleotide metabolism: produces dUMP, the immediate precursor of thymidine nucleotides and decreases the intracellular concentration of dUTP to avoid uracil incorporation into viral DNA. This chain is Deoxyuridine 5'-triphosphate nucleotidohydrolase, found in Human herpesvirus 7 (strain JI) (HHV-7).